Reading from the N-terminus, the 388-residue chain is Serpin B11 (388 aa).

An RCL region spans residues 338–362 (EEGTEAAAATGESISVKRLPVTVQF).

The protein belongs to the serpin family. Ov-serpin subfamily. As to expression, expressed in eye, lung, lymphocytes, thymus, stomach, uterus, heart, brain, liver, skeletal muscle, and in day 7, 15, and 17 embryos.

It localises to the cytoplasm. Functionally, inhibitor of serine proteases. Has moderate inhibitory activity for trypsin-like peptidases, but also some activity with cysteine peptidases, cathepsin L, K, and V, and the serine peptidase, tryptase gamma. The chain is Serpin B11 (Serpinb11) from Mus musculus (Mouse).